Reading from the N-terminus, the 177-residue chain is uncharacterized protein (177 aa).

It is found in the plastid. It localises to the chloroplast. This is an uncharacterized protein from Chlorella vulgaris (Green alga).